Consider the following 136-residue polypeptide: Phosphoribosyl-AMP cyclohydrolase (136 aa).

Aspartate 92 serves as a coordination point for Mg(2+). Cysteine 93 provides a ligand contact to Zn(2+). The Mg(2+) site is built by aspartate 94 and aspartate 96. Zn(2+) contacts are provided by cysteine 109 and cysteine 116.

It belongs to the PRA-CH family. Homodimer. Mg(2+) is required as a cofactor. Requires Zn(2+) as cofactor.

The protein localises to the cytoplasm. The catalysed reaction is 1-(5-phospho-beta-D-ribosyl)-5'-AMP + H2O = 1-(5-phospho-beta-D-ribosyl)-5-[(5-phospho-beta-D-ribosylamino)methylideneamino]imidazole-4-carboxamide. It functions in the pathway amino-acid biosynthesis; L-histidine biosynthesis; L-histidine from 5-phospho-alpha-D-ribose 1-diphosphate: step 3/9. Reversibly inhibited by EDTA and free zinc ions. Enzyme is inactivated by dialysis against 1,10-phenanthroline, which is a zinc specific chelator. Functionally, catalyzes the hydrolysis of the adenine ring of phosphoribosyl-AMP. This Methanococcus vannielii protein is Phosphoribosyl-AMP cyclohydrolase.